The chain runs to 303 residues: Ribosomal protein uL3 glutamine methyltransferase (303 aa).

Belongs to the protein N5-glutamine methyltransferase family. PrmB subfamily.

The catalysed reaction is L-glutaminyl-[ribosomal protein uL3] + S-adenosyl-L-methionine = N(5)-methyl-L-glutaminyl-[ribosomal protein uL3] + S-adenosyl-L-homocysteine + H(+). Functionally, methylates large ribosomal subunit protein uL3 on a specific glutamine residue. This chain is Ribosomal protein uL3 glutamine methyltransferase, found in Neisseria meningitidis serogroup B (strain ATCC BAA-335 / MC58).